We begin with the raw amino-acid sequence, 239 residues long: 1-(5-phosphoribosyl)-5-[(5-phosphoribosylamino)methylideneamino] imidazole-4-carboxamide isomerase (239 aa).

D8 acts as the Proton acceptor in catalysis. D129 functions as the Proton donor in the catalytic mechanism.

The protein belongs to the HisA/HisF family.

Its subcellular location is the cytoplasm. The enzyme catalyses 1-(5-phospho-beta-D-ribosyl)-5-[(5-phospho-beta-D-ribosylamino)methylideneamino]imidazole-4-carboxamide = 5-[(5-phospho-1-deoxy-D-ribulos-1-ylimino)methylamino]-1-(5-phospho-beta-D-ribosyl)imidazole-4-carboxamide. The protein operates within amino-acid biosynthesis; L-histidine biosynthesis; L-histidine from 5-phospho-alpha-D-ribose 1-diphosphate: step 4/9. This is 1-(5-phosphoribosyl)-5-[(5-phosphoribosylamino)methylideneamino] imidazole-4-carboxamide isomerase from Legionella pneumophila (strain Lens).